Consider the following 974-residue polypeptide: Probable proton ATPase 1A (974 aa).

Residues 1–23 show a composition bias toward basic and acidic residues; sequence MSSKKYELDAAAFEDKPESHSDA. The tract at residues 1 to 61 is disordered; sequence MSSKKYELDA…ATDLLPPSKG (61 aa). Over 1–92 the chain is Cytoplasmic; the sequence is MSSKKYELDA…KTPSWLIYVR (92 aa). The helical transmembrane segment at 93 to 112 threads the bilayer; the sequence is GLWGPMPAALWIAIIIEFAL. Topologically, residues 113 to 117 are extracellular; that stretch reads ENWPD. Residues 118–137 traverse the membrane as a helical segment; it reads GAILFAIQIANATIGWYETI. At 138-264 the chain is on the cytoplasmic side; sequence KAGDAVAALK…LGNIHVILRR (127 aa). The helical transmembrane segment at 265 to 286 threads the bilayer; that stretch reads VMFSLCAISFMLCMCCFIYLLA. Over 287 to 294 the chain is Extracellular; it reads RFYETFRH. Residues 295-321 traverse the membrane as a helical segment; that stretch reads ALQFAVVVLVVSIPIALEIVVTTTLAV. Residues 322–630 lie on the Cytoplasmic side of the membrane; that stretch reads GSKHLSKHKI…AVHGATDAAR (309 aa). Asp351 serves as the catalytic 4-aspartylphosphate intermediate. Residues Asp605 and Asp609 each contribute to the Mg(2+) site. A helical transmembrane segment spans residues 631–651; the sequence is AAADMVLTEPGLSVVVEAMLV. At 652 to 661 the chain is on the extracellular side; that stretch reads SREVFQRMLS. Residues 662-684 traverse the membrane as a helical segment; it reads FLTYRISATLQLVCFFFIACFSL. Residues 685–697 lie on the Cytoplasmic side of the membrane; the sequence is TPKAYGSVDPHFQ. The chain crosses the membrane as a helical span at residues 698 to 712; that stretch reads FFHLPVLMFMLITLL. Over 713-737 the chain is Extracellular; it reads NDGCLMTIGYDHVIPSERPQKWNLP. Position 714 (Asp714) interacts with Mg(2+). Residues 738–761 form a helical membrane-spanning segment; sequence VVFVSASILAAVACGSSLMLLWIG. At 762–812 the chain is on the cytoplasmic side; it reads LEGYSSQYYENSWFHRLGLAQLPQGKLVTMMYLKISISDFLTLFSSRTGGH. A helical transmembrane segment spans residues 813-840; sequence FFFYMPPSPILFCGAIISLLVSTMAASF. Residues 841-868 are Extracellular-facing; that stretch reads WHKSRPDNVLTEGLAWGQTNAEKLLPLW. A helical transmembrane segment spans residues 869-887; sequence VWIYCIVWWFVQDVVKVLA. Over 888-974 the chain is Cytoplasmic; the sequence is HICMDAVDLF…VNVYVSRDQK (87 aa). The segment covering 950-959 has biased composition (basic and acidic residues); the sequence is GLREDTHSPI. Residues 950 to 974 are disordered; sequence GLREDTHSPIEEASPVNVYVSRDQK.

The protein belongs to the cation transport ATPase (P-type) (TC 3.A.3) family. Type IIIA subfamily.

It is found in the membrane. The catalysed reaction is ATP + H2O + H(+)(in) = ADP + phosphate + 2 H(+)(out). In Leishmania donovani, this protein is Probable proton ATPase 1A (H1A).